The chain runs to 241 residues: ATP synthase subunit 4, mitochondrial (241 aa).

The N-terminal 35 residues, 1 to 35 (MASRLARTAVGAARLRPSVVPRVLPALSTVASPRY), are a transit peptide targeting the mitochondrion.

Belongs to the eukaryotic ATPase B chain family. As to quaternary structure, F-type ATPases have 2 components, CF(1) - the catalytic core - and CF(0) - the membrane proton channel. In yeast, the dimeric form of ATP synthase consists of 17 polypeptides: alpha, beta, gamma, delta, epsilon, 4 (B), 5 (OSCP), 6 (A), 8, 9 (C), d, E (Tim11), f, g, h, i/j and k.

It is found in the mitochondrion. It localises to the mitochondrion inner membrane. Mitochondrial membrane ATP synthase (F(1)F(0) ATP synthase or Complex V) produces ATP from ADP in the presence of a proton gradient across the membrane which is generated by electron transport complexes of the respiratory chain. F-type ATPases consist of two structural domains, F(1) - containing the extramembraneous catalytic core, and F(0) - containing the membrane proton channel, linked together by a central stalk and a peripheral stalk. During catalysis, ATP synthesis in the catalytic domain of F(1) is coupled via a rotary mechanism of the central stalk subunits to proton translocation. Part of the complex F(0) domain and the peripheric stalk, which acts as a stator to hold the catalytic alpha(3)beta(3) subcomplex and subunit a/atp6 static relative to the rotary elements. The polypeptide is ATP synthase subunit 4, mitochondrial (atp-3) (Neurospora crassa (strain ATCC 24698 / 74-OR23-1A / CBS 708.71 / DSM 1257 / FGSC 987)).